The sequence spans 333 residues: NADH-quinone oxidoreductase subunit H (333 aa).

8 consecutive transmembrane segments (helical) span residues 15 to 35, 88 to 108, 117 to 137, 159 to 179, 191 to 211, 239 to 259, 274 to 296, and 313 to 333; these read FFIF…FVTY, FILA…VIPF, IGVG…GVVT, ISYE…AGSL, VWYI…AVAE, WAFF…LITV, IPGA…WFRV, and VLLP…ELFF.

This sequence belongs to the complex I subunit 1 family. NDH-1 is composed of 14 different subunits. Subunits NuoA, H, J, K, L, M, N constitute the membrane sector of the complex.

The protein resides in the cell membrane. The enzyme catalyses a quinone + NADH + 5 H(+)(in) = a quinol + NAD(+) + 4 H(+)(out). In terms of biological role, NDH-1 shuttles electrons from NADH, via FMN and iron-sulfur (Fe-S) centers, to quinones in the respiratory chain. The immediate electron acceptor for the enzyme in this species is believed to be ubiquinone. Couples the redox reaction to proton translocation (for every two electrons transferred, four hydrogen ions are translocated across the cytoplasmic membrane), and thus conserves the redox energy in a proton gradient. This subunit may bind ubiquinone. This chain is NADH-quinone oxidoreductase subunit H, found in Bacillus cereus (strain G9842).